The sequence spans 631 residues: Probable G-protein coupled receptor 153 (631 aa).

The Extracellular portion of the chain corresponds to 1 to 11 (MSDERRLPSSA). A helical membrane pass occupies residues 12 to 32 (VGWLACGGLSLLANAWGILSV). The Cytoplasmic portion of the chain corresponds to 33–41 (GAKQKKWKP). The helical transmembrane segment at 42–62 (LEFLLCTLAATHMLNVAVPIA) threads the bilayer. The Extracellular segment spans residues 63–84 (TYAVVQLRRQRPDYEWNEGLCK). The helical transmembrane segment at 85–105 (VFVSTFYTLTLATCFSVTSIS) threads the bilayer. The Cytoplasmic segment spans residues 106–126 (YHRMWMVRWPVNYRLSNAKKQ). The chain crosses the membrane as a helical span at residues 127–147 (AVHTVMGIWMVSFILSALPAV). Residues 148-162 (GWHDTSERFYTHGCR) are Extracellular-facing. A helical transmembrane segment spans residues 163 to 183 (FIVAEIGLGFGVCFLLLVGGS). Residues 184–243 (VAMGMVCTAIALFQTLATQVGHRADRRTFTVPTIVVEDAQGKRRSSIDGSEPARTSLQIT) are Cytoplasmic-facing. Residues 244–264 (GLVATIVVIYDCLMGFPVLVV) form a helical membrane-spanning segment. The Extracellular segment spans residues 265 to 276 (SFSSLRADASAP). A helical transmembrane segment spans residues 277-297 (WMALCVLWCSVTQALLLPLFL). Over 298–631 (WTCDRYRADL…LHSDSLGSAS (334 aa)) the chain is Cytoplasmic. Disordered stretches follow at residues 486–518 (LQPS…RSAS), 546–590 (QPFP…SLSA), and 603–631 (CGSI…GSAS). The segment covering 605 to 617 (SISSFLSSPSESS) has biased composition (low complexity).

This sequence belongs to the G-protein coupled receptor 1 family.

It localises to the cell membrane. Functionally, orphan receptor. This chain is Probable G-protein coupled receptor 153 (Gpr153), found in Mus musculus (Mouse).